We begin with the raw amino-acid sequence, 584 residues long: uncharacterized protein (584 aa).

11 PbH1 repeats span residues 100–128, 139–161, 173–195, 196–225, 236–266, 313–333, 334–356, 357–382, 406–427, 456–478, and 529–554; these read QENITISGGQIIGERDEHTYASAGIRSTH, CSNVVIDDVKISDFTGDGIIVSP, SEQIIIRRCEVRRSRRNNISITG, CDMVTVEECLIEDAGTGNGTAPKFGIDIEG, PINVSIRNNHFVGNVSSSVTNFNGYGILIEG, TSDAVIAGNLITGFSTGIDVR, GKSVLVTNNKISNFENTGILVYQ, SSDVKVDGNQIQNGLSETRRSIGLRA, GGNMIIKDNLLRKFSRGIWIAQ, NAGAIIKNNTFKEFKNYPIYCST, and SAGSIISGNTINNLSAGTATAIQTNT.

This is an uncharacterized protein from Bacillus subtilis (strain 168).